Reading from the N-terminus, the 531-residue chain is Non-muscle caldesmon (531 aa).

The tract at residues 20-200 (AYQRNDDDEE…LKGGNLGENQ (181 aa)) is myosin and calmodulin-binding. The interval 21–379 (YQRNDDDEEE…KKPFKCFTPK (359 aa)) is disordered. Basic and acidic residues predominate over residues 41 to 50 (QERLRQKQEE). The span at 54-68 (GQVTDQVEAHVQNSA) shows a compositional bias: polar residues. Residues 93–116 (RLARREERRQKRLQEALERQKEFD) show a composition bias toward basic and acidic residues. Over residues 120-133 (TDGSLSVPSRRMQN) the composition is skewed to polar residues. Phosphoserine is present on Ser-123. Residues 143-156 (GEEKGESRSGRYEM) show a composition bias toward basic and acidic residues. Over residues 162-172 (VITSYQKNSYQ) the composition is skewed to polar residues. The segment covering 200–227 (QIKDEKIKKDKEPKEEVKNFLDRKKGFT) has biased composition (basic and acidic residues). Residue Ser-249 is modified to Phosphoserine; by CDK1. Basic and acidic residues-rich tracts occupy residues 271–297 (AGKRLEELRRRRGETESEEFEKLKQKQ) and 305–372 (EELK…DKKP). A tropomyosin-binding region spans residues 303 to 360 (ELEELKKKREERRKVLEEEEQRRKQEEADRKAREEEEKRRLKEEIERRRAEAAEKRQK). At Ser-382 the chain carries Phosphoserine. Lys-384 participates in a covalent cross-link: Glycyl lysine isopeptide (Lys-Gly) (interchain with G-Cter in SUMO2). A strong actin-binding region spans residues 392-424 (LNKSVQKSGVKSTHQAAVVSKIDSRLEQYTNAI). Ser-395 carries the post-translational modification Phosphoserine. A tropomyosin-binding region spans residues 402 to 412 (KSTHQAAVVSK). The calmodulin-binding stretch occupies residues 454–460 (WEKGSVF). The disordered stretch occupies residues 458–531 (SVFSSPSASG…VDKVTSPTKV (74 aa)). Polar residues predominate over residues 459-471 (VFSSPSASGTPNK). A Phosphoserine; by CDK1 modification is found at Ser-462. Thr-468 is modified (phosphothreonine; by CDK1). Residues Ser-491 and Ser-497 each carry the phosphoserine; by CDK1 modification. A compositionally biased stretch (basic and acidic residues) spans 503–522 (SDLRPGDVSGKRNLWEKQSV). The interval 506 to 531 (RPGDVSGKRNLWEKQSVDKVTSPTKV) is weak actin-binding. Residue Ser-527 is modified to Phosphoserine; by CDK1.

This sequence belongs to the caldesmon family. In terms of processing, in non-muscle cells, phosphorylation by CDK1 during mitosis causes caldesmon to dissociate from microfilaments. Phosphorylation reduces caldesmon binding to actin, myosin, and calmodulin as well as its inhibition of actomyosin ATPase activity. Phosphorylation also occurs in both quiescent and dividing smooth muscle cells with similar effects on the interaction with actin and calmodulin and on microfilaments reorganization. CDK1-mediated phosphorylation promotes Schwann cell migration during peripheral nerve regeneration. High-molecular-weight caldesmon (h-caldesmon) is predominantly expressed in smooth muscles, whereas low-molecular-weight caldesmon (l-caldesmon) is widely distributed in non-muscle tissues and cells. Not expressed in skeletal muscle or heart.

It is found in the cytoplasm. It localises to the cytoskeleton. Its subcellular location is the myofibril. The protein resides in the stress fiber. Actin- and myosin-binding protein implicated in the regulation of actomyosin interactions in smooth muscle and nonmuscle cells (could act as a bridge between myosin and actin filaments). Stimulates actin binding of tropomyosin which increases the stabilization of actin filament structure. In muscle tissues, inhibits the actomyosin ATPase by binding to F-actin. This inhibition is attenuated by calcium-calmodulin and is potentiated by tropomyosin. Interacts with actin, myosin, two molecules of tropomyosin and with calmodulin. Also plays an essential role during cellular mitosis and receptor capping. Involved in Schwann cell migration during peripheral nerve regeneration. This Rattus norvegicus (Rat) protein is Non-muscle caldesmon (Cald1).